The sequence spans 163 residues: SsrA-binding protein (163 aa).

The protein belongs to the SmpB family.

The protein resides in the cytoplasm. Required for rescue of stalled ribosomes mediated by trans-translation. Binds to transfer-messenger RNA (tmRNA), required for stable association of tmRNA with ribosomes. tmRNA and SmpB together mimic tRNA shape, replacing the anticodon stem-loop with SmpB. tmRNA is encoded by the ssrA gene; the 2 termini fold to resemble tRNA(Ala) and it encodes a 'tag peptide', a short internal open reading frame. During trans-translation Ala-aminoacylated tmRNA acts like a tRNA, entering the A-site of stalled ribosomes, displacing the stalled mRNA. The ribosome then switches to translate the ORF on the tmRNA; the nascent peptide is terminated with the 'tag peptide' encoded by the tmRNA and targeted for degradation. The ribosome is freed to recommence translation, which seems to be the essential function of trans-translation. This Corynebacterium diphtheriae (strain ATCC 700971 / NCTC 13129 / Biotype gravis) protein is SsrA-binding protein.